We begin with the raw amino-acid sequence, 203 residues long: Guanylate kinase (203 aa).

One can recognise a Guanylate kinase-like domain in the interval 3–181 (GSLFIVAAPS…AHTDLRAIVQ (179 aa)). Position 10-17 (10-17 (APSGAGKT)) interacts with ATP.

The protein belongs to the guanylate kinase family.

It is found in the cytoplasm. The catalysed reaction is GMP + ATP = GDP + ADP. Its function is as follows. Essential for recycling GMP and indirectly, cGMP. The chain is Guanylate kinase from Nitrosococcus oceani (strain ATCC 19707 / BCRC 17464 / JCM 30415 / NCIMB 11848 / C-107).